The chain runs to 496 residues: Probable cytosol aminopeptidase (496 aa).

Residues lysine 266 and aspartate 271 each coordinate Mn(2+). Lysine 278 is a catalytic residue. Aspartate 289, aspartate 348, and glutamate 350 together coordinate Mn(2+). Arginine 352 is a catalytic residue.

This sequence belongs to the peptidase M17 family. Mn(2+) is required as a cofactor.

Its subcellular location is the cytoplasm. The enzyme catalyses Release of an N-terminal amino acid, Xaa-|-Yaa-, in which Xaa is preferably Leu, but may be other amino acids including Pro although not Arg or Lys, and Yaa may be Pro. Amino acid amides and methyl esters are also readily hydrolyzed, but rates on arylamides are exceedingly low.. It carries out the reaction Release of an N-terminal amino acid, preferentially leucine, but not glutamic or aspartic acids.. Its function is as follows. Presumably involved in the processing and regular turnover of intracellular proteins. Catalyzes the removal of unsubstituted N-terminal amino acids from various peptides. The polypeptide is Probable cytosol aminopeptidase (Pseudomonas syringae pv. syringae (strain B728a)).